The chain runs to 338 residues: tRNA N6-adenosine threonylcarbamoyltransferase (338 aa).

Fe cation-binding residues include H110, H114, and Y131. Residues 131–135 (YVSGG), D163, D184, and N268 contribute to the substrate site. D296 provides a ligand contact to Fe cation.

Belongs to the KAE1 / TsaD family. Fe(2+) serves as cofactor.

It is found in the cytoplasm. The catalysed reaction is L-threonylcarbamoyladenylate + adenosine(37) in tRNA = N(6)-L-threonylcarbamoyladenosine(37) in tRNA + AMP + H(+). Its function is as follows. Required for the formation of a threonylcarbamoyl group on adenosine at position 37 (t(6)A37) in tRNAs that read codons beginning with adenine. Is probably involved in the transfer of the threonylcarbamoyl moiety of threonylcarbamoyl-AMP (TC-AMP) to the N6 group of A37. The polypeptide is tRNA N6-adenosine threonylcarbamoyltransferase (Staphylothermus marinus (strain ATCC 43588 / DSM 3639 / JCM 9404 / F1)).